A 400-amino-acid chain; its full sequence is Forkhead box protein Q1 (400 aa).

The disordered stretch occupies residues 1–112 (MKLEVFVPRA…EGARSKPYTR (112 aa)). Residues 32–54 (LSAAGDDSLGSDGDCAANSPAAG) show a composition bias toward low complexity. 2 stretches are compositionally biased toward gly residues: residues 55 to 66 (SGAGDLEGGGGE) and 95 to 104 (CAGGVGGGEG). The segment at residues 115–210 (KPPYSYIALI…ADGVFRRRRK (96 aa)) is a DNA-binding region (fork-head). A disordered region spans residues 213–264 (SHRTTVSASGLRPEEAPPGPAGTPQPAPAARSSPIARSPARQEERSSPASKF). Residues 228 to 239 (APPGPAGTPQPA) are compositionally biased toward pro residues. A compositionally biased stretch (low complexity) spans 240–251 (PAARSSPIARSP).

In terms of tissue distribution, expressed in kidney and stomach. Expression in the outer medulla of the kidney and the transitional epithelium. Expressed in the hair follicle medulla.

It localises to the nucleus. Plays a role in hair follicle differentiation. The chain is Forkhead box protein Q1 (Foxq1) from Mus musculus (Mouse).